The sequence spans 27 residues: Ganodermin (27 aa).

In terms of biological role, has antifungal activity against B.cinera, F.oxysporum and P.piricola with IC(50) values of 15.2 uM, 12.4 uM and 18.1 uM, respectively. Lacks hemagglutinating activity towards rabbit erythrocytes. Lacks deoxyribonuclease, ribonuclease and protease inhibitory activities. This chain is Ganodermin, found in Ganoderma lucidum (Ling zhi medicinal fungus).